We begin with the raw amino-acid sequence, 150 residues long: Small ribosomal subunit protein eS19 (150 aa).

It belongs to the eukaryotic ribosomal protein eS19 family. As to quaternary structure, part of the 30S ribosomal subunit.

Functionally, may be involved in maturation of the 30S ribosomal subunit. This chain is Small ribosomal subunit protein eS19, found in Thermoplasma volcanium (strain ATCC 51530 / DSM 4299 / JCM 9571 / NBRC 15438 / GSS1).